Reading from the N-terminus, the 225-residue chain is MHINDWPTDERPREKLLARGAAVLSDAELLAIFVGSGLRGQDAVRTARDLLHRHGPLRCLLDRPAKALARLPGLGPASACKLSAALELANRHLLSDLERGEALSDPSSVGRYFSQRLRARNYEVFAALFLDSRHRAIAFEELFTGTIDAAEIHPREVVRRALLHNAAAVVVGHNHPSGNPEPSEADRAVTQRLLQALGLVDIRLLDHFVIGDGRPVSLAERGWVP.

The 123-residue stretch at 102–224 (ALSDPSSVGR…PVSLAERGWV (123 aa)) folds into the MPN domain. Residues H173, H175, and D186 each contribute to the Zn(2+) site. The short motif at 173 to 186 (HNHPSGNPEPSEAD) is the JAMM motif element.

It belongs to the UPF0758 family.

The sequence is that of UPF0758 protein XC_3944 from Xanthomonas campestris pv. campestris (strain 8004).